We begin with the raw amino-acid sequence, 337 residues long: Major outer membrane protein P.IB (337 aa).

Residues 1 to 19 (MKKSLIALTLAALPVAAMA) form the signal peptide.

Belongs to the Gram-negative porin family. In terms of assembly, homotrimer.

It localises to the cell outer membrane. In terms of biological role, serves as a slightly cation selective porin. This Neisseria lactamica protein is Major outer membrane protein P.IB (por).